Here is a 110-residue protein sequence, read N- to C-terminus: DNA-binding protein Tneu_1679 (110 aa).

This sequence belongs to the PDCD5 family.

In Pyrobaculum neutrophilum (strain DSM 2338 / JCM 9278 / NBRC 100436 / V24Sta) (Thermoproteus neutrophilus), this protein is DNA-binding protein Tneu_1679.